A 243-amino-acid polypeptide reads, in one-letter code: Biosynthetic peptidoglycan transglycosylase (243 aa).

The chain crosses the membrane as a helical span at residues 21–43 (LLIVSLVSALMSVLQVIVFRFVD).

It belongs to the glycosyltransferase 51 family.

It localises to the cell inner membrane. The catalysed reaction is [GlcNAc-(1-&gt;4)-Mur2Ac(oyl-L-Ala-gamma-D-Glu-L-Lys-D-Ala-D-Ala)](n)-di-trans,octa-cis-undecaprenyl diphosphate + beta-D-GlcNAc-(1-&gt;4)-Mur2Ac(oyl-L-Ala-gamma-D-Glu-L-Lys-D-Ala-D-Ala)-di-trans,octa-cis-undecaprenyl diphosphate = [GlcNAc-(1-&gt;4)-Mur2Ac(oyl-L-Ala-gamma-D-Glu-L-Lys-D-Ala-D-Ala)](n+1)-di-trans,octa-cis-undecaprenyl diphosphate + di-trans,octa-cis-undecaprenyl diphosphate + H(+). It participates in cell wall biogenesis; peptidoglycan biosynthesis. Peptidoglycan polymerase that catalyzes glycan chain elongation from lipid-linked precursors. This chain is Biosynthetic peptidoglycan transglycosylase, found in Xylella fastidiosa (strain M12).